The sequence spans 314 residues: tRNA dimethylallyltransferase (314 aa).

40–47 (GPTASGKS) contributes to the ATP binding site. Position 42 to 47 (42 to 47 (TASGKS)) interacts with substrate.

This sequence belongs to the IPP transferase family. Monomer. The cofactor is Mg(2+).

The catalysed reaction is adenosine(37) in tRNA + dimethylallyl diphosphate = N(6)-dimethylallyladenosine(37) in tRNA + diphosphate. Its function is as follows. Catalyzes the transfer of a dimethylallyl group onto the adenine at position 37 in tRNAs that read codons beginning with uridine, leading to the formation of N6-(dimethylallyl)adenosine (i(6)A). In Cereibacter sphaeroides (strain KD131 / KCTC 12085) (Rhodobacter sphaeroides), this protein is tRNA dimethylallyltransferase.